The sequence spans 274 residues: PTS system sorbose-specific EIID component (274 aa).

Positions 4–273 (KKITQGDLVS…GIIGNALGFL (270 aa)) constitute a PTS EIID domain. A run of 6 helical transmembrane segments spans residues 61–81 (LVFF…TAAM), 99–119 (IKVG…WGTL), 126–146 (LGAS…FFIF), 186–206 (ILGL…NVPL), 226–246 (ILDQ…MVRL), and 253–273 (PVWL…LGFL).

It is found in the cell inner membrane. Its function is as follows. The phosphoenolpyruvate-dependent sugar phosphotransferase system (PTS), a major carbohydrate active transport system, catalyzes the phosphorylation of incoming sugar substrates concomitant with their translocation across the cell membrane. The enzyme II SorABFM PTS system is involved in sorbose transport. The sequence is that of PTS system sorbose-specific EIID component from Klebsiella pneumoniae.